A 402-amino-acid polypeptide reads, in one-letter code: Shaggy-related protein kinase GSK2 (402 aa).

A disordered region spans residues 1-38 (MDQPAPAPEPMLLDAQPPAAVACDKKQQEGEAPYAEGN). The region spanning 63-347 (YMAERVVGTG…ALDACAHPFF (285 aa)) is the Protein kinase domain. Residues 69–77 (VGTGSFGIV) and lysine 92 each bind ATP. The active-site Proton acceptor is aspartate 188.

This sequence belongs to the protein kinase superfamily. CMGC Ser/Thr protein kinase family. GSK-3 subfamily. As to quaternary structure, interacts with DLT. Interacts with OFP8. Interacts with GRF4. Interacts with PUB24. Interacts with SMOS1. Post-translationally, autophosphorylated. In terms of tissue distribution, expressed in lamina joints, vascular tissue and nodes.

Its subcellular location is the cytoplasm. The protein resides in the nucleus. The enzyme catalyses L-seryl-[protein] + ATP = O-phospho-L-seryl-[protein] + ADP + H(+). It carries out the reaction L-threonyl-[protein] + ATP = O-phospho-L-threonyl-[protein] + ADP + H(+). In terms of biological role, serine-threonine kinase that acts as a negative regulator of brassinosteroid (BR) signaling. Phosphorylates DLT and BZR1, two positive regulators that mediates several BR responses. Phosphorylation of DLT and BZR1 inhibits their activities in BR signaling. Phosphorylates OFP8, a positive regulator of BR responses. Phosphorylated OFP8 shuttles from the nucleus to the cytoplasm where it is degraded by the proteasome. Phosphorylates the E3 ubiquitin-protein ligase PUB24, a negative regulator of BR signaling, which targets BZR1 and promotes its degradation via the 26S proteasome. Phosphorylation of PUB24 increases its stability. Phosphorylates the AP2-ERF transcription factor SMOS1, a positive regulator of BR signaling, which cooperatively functions in a transactivating complex with BZR1 to enhance the transcription of BR biosynthetic genes. Phosphorylation of SMOS1 leads to its degradation by an unknown mechanism. In Oryza sativa subsp. japonica (Rice), this protein is Shaggy-related protein kinase GSK2.